We begin with the raw amino-acid sequence, 134 residues long: ATP synthase epsilon chain, chloroplastic (134 aa).

It belongs to the ATPase epsilon chain family. As to quaternary structure, F-type ATPases have 2 components, CF(1) - the catalytic core - and CF(0) - the membrane proton channel. CF(1) has five subunits: alpha(3), beta(3), gamma(1), delta(1), epsilon(1). CF(0) has three main subunits: a, b and c.

Its subcellular location is the plastid. The protein localises to the chloroplast thylakoid membrane. Its function is as follows. Produces ATP from ADP in the presence of a proton gradient across the membrane. The chain is ATP synthase epsilon chain, chloroplastic from Liriodendron tulipifera (Tuliptree).